The chain runs to 932 residues: Probable serine/threonine-protein kinase clkA (932 aa).

Basic residues predominate over residues 1 to 10 (MDRFQTKRKT). 3 disordered regions span residues 1-21 (MDRFQTKRKTYSYNGYSNNDY), 39-198 (YKNN…YGDT), and 212-562 (NDYD…TNTN). Low complexity-rich tracts occupy residues 11-21 (YSYNGYSNNDY) and 39-123 (YKNN…ENNY). Residues 124–143 (FQSENQSNKDQNSYFNSSYL) are compositionally biased toward polar residues. 4 stretches are compositionally biased toward low complexity: residues 148–196 (DNYN…NSYG), 218–305 (NNNN…NGGN), 314–342 (VFNNNNNNNNNNNNNYNNYNSNNNYNNDY), and 351–562 (NIYS…TNTN). Residues 590 to 920 (YKVLCTVGSG…ASDALSHPFL (331 aa)) enclose the Protein kinase domain. ATP is bound by residues 596–604 (VGSGTFSTV) and lysine 619. The active-site Proton acceptor is the aspartate 719.

The protein belongs to the protein kinase superfamily. CMGC Ser/Thr protein kinase family.

The enzyme catalyses L-seryl-[protein] + ATP = O-phospho-L-seryl-[protein] + ADP + H(+). The catalysed reaction is L-threonyl-[protein] + ATP = O-phospho-L-threonyl-[protein] + ADP + H(+). The sequence is that of Probable serine/threonine-protein kinase clkA (clkA) from Dictyostelium discoideum (Social amoeba).